A 127-amino-acid chain; its full sequence is DNA-directed RNA polymerase subunit omega (127 aa).

It belongs to the RNA polymerase subunit omega family. In terms of assembly, the RNAP catalytic core consists of 2 alpha, 1 beta, 1 beta' and 1 omega subunit. When a sigma factor is associated with the core the holoenzyme is formed, which can initiate transcription.

The catalysed reaction is RNA(n) + a ribonucleoside 5'-triphosphate = RNA(n+1) + diphosphate. In terms of biological role, promotes RNA polymerase assembly. Latches the N- and C-terminal regions of the beta' subunit thereby facilitating its interaction with the beta and alpha subunits. The polypeptide is DNA-directed RNA polymerase subunit omega (Rickettsia canadensis (strain McKiel)).